Consider the following 325-residue polypeptide: Ribosomal large subunit pseudouridine synthase D (325 aa).

Residues 18-91 form the S4 RNA-binding domain; sequence QRLDQAIAEL…IPLDIVYEDD (74 aa). Residue Asp-139 is part of the active site.

The protein belongs to the pseudouridine synthase RluA family.

Its subcellular location is the cytoplasm. It catalyses the reaction uridine(1911/1915/1917) in 23S rRNA = pseudouridine(1911/1915/1917) in 23S rRNA. Responsible for synthesis of pseudouridine from uracil at positions 1911, 1915 and 1917 in 23S ribosomal RNA. The protein is Ribosomal large subunit pseudouridine synthase D (rluD) of Vibrio parahaemolyticus serotype O3:K6 (strain RIMD 2210633).